A 580-amino-acid chain; its full sequence is Methyl-CpG-binding domain protein 4 (580 aa).

The tract at residues 1 to 36 is disordered; that stretch reads MGTTGLESLSLGDRGAAPTVTSSERLVPDPPNDLRK. Residues 76-148 enclose the MBD domain; that stretch reads ATAGTECRKS…EDFDFTVLSK (73 aa). A phosphoserine mark is found at serine 318 and serine 428. The active site involves aspartate 560.

Interacts with MLH1.

The protein localises to the nucleus. Functionally, mismatch-specific DNA N-glycosylase involved in DNA repair. Has thymine glycosylase activity and is specific for G:T mismatches within methylated and unmethylated CpG sites. Can also remove uracil or 5-fluorouracil in G:U mismatches. Has no lyase activity. Was first identified as methyl-CpG-binding protein. This chain is Methyl-CpG-binding domain protein 4, found in Homo sapiens (Human).